A 162-amino-acid chain; its full sequence is uncharacterized protein (162 aa).

The segment at 1–23 (MAQLPLSPAPQRPETKTPGKPEA) is disordered. The segment covering 13 to 23 (PETKTPGKPEA) has biased composition (basic and acidic residues).

This is an uncharacterized protein from Rhodobacter capsulatus (Rhodopseudomonas capsulata).